A 411-amino-acid chain; its full sequence is Probable peptidoglycan glycosyltransferase FtsW (411 aa).

At 1–40 the chain is on the cytoplasmic side; the sequence is MLERMLPFLGRKRDKAAADLPVRVGHSAPRNSRMLEYDQN. A helical membrane pass occupies residues 41–61; sequence LVWVTLLLLAYGLVMVYSATI. The Periplasmic segment spans residues 62 to 81; sequence SFHDSPRYAQWSPYHYFIRD. The chain crosses the membrane as a helical span at residues 82–102; that stretch reads LFSIAAALLASWIVVQIPMAE. Residues 103-109 lie on the Cytoplasmic side of the membrane; it reads LQKWSMR. Residues 110 to 130 form a helical membrane-spanning segment; the sequence is FFFLSLIGLVLVLLPHIGKDV. At 131–136 the chain is on the periplasmic side; that stretch reads NGSKRW. Residues 137–157 traverse the membrane as a helical segment; the sequence is VVFPGGLNFQPSELVKLTALI. The Cytoplasmic portion of the chain corresponds to 158–172; sequence YAADFMVRKQEVKQS. The chain crosses the membrane as a helical span at residues 173-193; it reads LLKTFLPMMAVMMIVGVLLLA. The Periplasmic portion of the chain corresponds to 194 to 196; that stretch reads EPD. A helical transmembrane segment spans residues 197-217; sequence MGAFLVIASITLAILFLGGAN. The Cytoplasmic segment spans residues 218–219; that stretch reads GK. A helical membrane pass occupies residues 220–240; that stretch reads LFSVFSVAVIGAFVLMIVLSP. Residues 241 to 298 are Periplasmic-facing; sequence WRRDRIFAYLNPWSESNALGSAYQLSHALIAMGRGEWFGVGLGGSIEKLHYLPEAHTD. A helical membrane pass occupies residues 299-319; that stretch reads FLLAIIGEELGLVGVGVVIFA. The Cytoplasmic segment spans residues 320 to 347; the sequence is FYWIVRRAFDIGRQALVLDRMYSALVAQ. The chain crosses the membrane as a helical span at residues 348–368; the sequence is GIGVWIGGQAFINIGVNLGLL. The Periplasmic portion of the chain corresponds to 369–374; the sequence is PTKGLT. Residues 375 to 395 traverse the membrane as a helical segment; it reads LPLMSYGGSALLLNCMAIAVL. The Cytoplasmic segment spans residues 396 to 411; the sequence is LRVDFENRILMRGGHV.

This sequence belongs to the SEDS family. FtsW subfamily.

It is found in the cell inner membrane. The catalysed reaction is [GlcNAc-(1-&gt;4)-Mur2Ac(oyl-L-Ala-gamma-D-Glu-L-Lys-D-Ala-D-Ala)](n)-di-trans,octa-cis-undecaprenyl diphosphate + beta-D-GlcNAc-(1-&gt;4)-Mur2Ac(oyl-L-Ala-gamma-D-Glu-L-Lys-D-Ala-D-Ala)-di-trans,octa-cis-undecaprenyl diphosphate = [GlcNAc-(1-&gt;4)-Mur2Ac(oyl-L-Ala-gamma-D-Glu-L-Lys-D-Ala-D-Ala)](n+1)-di-trans,octa-cis-undecaprenyl diphosphate + di-trans,octa-cis-undecaprenyl diphosphate + H(+). Its pathway is cell wall biogenesis; peptidoglycan biosynthesis. In terms of biological role, peptidoglycan polymerase that is essential for cell division. The polypeptide is Probable peptidoglycan glycosyltransferase FtsW (Thiomonas intermedia (strain K12) (Thiobacillus intermedius)).